Here is a 172-residue protein sequence, read N- to C-terminus: Adenine phosphoribosyltransferase (172 aa).

Belongs to the purine/pyrimidine phosphoribosyltransferase family. In terms of assembly, homodimer.

The protein localises to the cytoplasm. It catalyses the reaction AMP + diphosphate = 5-phospho-alpha-D-ribose 1-diphosphate + adenine. The protein operates within purine metabolism; AMP biosynthesis via salvage pathway; AMP from adenine: step 1/1. Its function is as follows. Catalyzes a salvage reaction resulting in the formation of AMP, that is energically less costly than de novo synthesis. In Clostridium botulinum (strain Loch Maree / Type A3), this protein is Adenine phosphoribosyltransferase.